A 294-amino-acid chain; its full sequence is Cytidine deaminase (294 aa).

2 consecutive CMP/dCMP-type deaminase domains span residues 48–168 and 186–294; these read DEDA…FGPK and LTGD…VLLA. 89 to 91 is a binding site for substrate; the sequence is NME. A Zn(2+)-binding site is contributed by H102. E104 (proton donor) is an active-site residue. 2 residues coordinate Zn(2+): C129 and C132.

Belongs to the cytidine and deoxycytidylate deaminase family. As to quaternary structure, homodimer. Zn(2+) is required as a cofactor.

The catalysed reaction is cytidine + H2O + H(+) = uridine + NH4(+). It carries out the reaction 2'-deoxycytidine + H2O + H(+) = 2'-deoxyuridine + NH4(+). In terms of biological role, this enzyme scavenges exogenous and endogenous cytidine and 2'-deoxycytidine for UMP synthesis. This Escherichia coli O157:H7 protein is Cytidine deaminase.